Consider the following 510-residue polypeptide: Amidophosphoribosyltransferase (510 aa).

Cys-2 (nucleophile) is an active-site residue. One can recognise a Glutamine amidotransferase type-2 domain in the interval 2–239 (CGILGIALAD…PGEAVIIPKD (238 aa)). Mg(2+) contacts are provided by Asp-373 and Asp-374.

It in the C-terminal section; belongs to the purine/pyrimidine phosphoribosyltransferase family. Mg(2+) is required as a cofactor.

It carries out the reaction 5-phospho-beta-D-ribosylamine + L-glutamate + diphosphate = 5-phospho-alpha-D-ribose 1-diphosphate + L-glutamine + H2O. The protein operates within purine metabolism; IMP biosynthesis via de novo pathway; N(1)-(5-phospho-D-ribosyl)glycinamide from 5-phospho-alpha-D-ribose 1-diphosphate: step 1/2. The sequence is that of Amidophosphoribosyltransferase (ADE4) from Lachancea kluyveri (Yeast).